A 200-amino-acid chain; its full sequence is Transcription elongation factor A protein-like 3 (200 aa).

The tract at residues 1–200 is disordered; sequence MEKPYNKNEG…QRGLHDIPYL (200 aa). The span at 20 to 36 shows a compositional bias: acidic residues; that stretch reads DEVEPDDEGKSDEEEKP. At serine 30 the chain carries Phosphoserine. The span at 37–50 shows a compositional bias: basic and acidic residues; that stretch reads DVEGKTECEGKRED. Positions 51–64 are enriched in acidic residues; it reads EGEPGDEGQLEDEG. Position 65 is a phosphoserine (serine 65). Basic and acidic residues-rich tracts occupy residues 65 to 80, 96 to 107, and 115 to 154; these read SQEKQGRSEGEGKPQG, AAEKRPAEDYVP, and DRGTDDSPKDSQEDLQERHLSSEEMMRECGDVSRAQEELR.

This sequence belongs to the TFS-II family. TFA subfamily.

Its subcellular location is the nucleus. May be involved in transcriptional regulation. In Homo sapiens (Human), this protein is Transcription elongation factor A protein-like 3 (TCEAL3).